The following is an 85-amino-acid chain: Large ribosomal subunit protein bL27 (85 aa).

A disordered region spans residues 1–26 (MAHKKGVGSSRNGRDSNPKMLGVKRF).

This sequence belongs to the bacterial ribosomal protein bL27 family.

The chain is Large ribosomal subunit protein bL27 from Roseiflexus sp. (strain RS-1).